The following is a 420-amino-acid chain: Light-independent protochlorophyllide reductase subunit N (420 aa).

[4Fe-4S] cluster is bound by residues cysteine 21, cysteine 46, and cysteine 103.

Belongs to the BchN/ChlN family. In terms of assembly, protochlorophyllide reductase is composed of three subunits; BchL, BchN and BchB. Forms a heterotetramer of two BchB and two BchN subunits. It depends on [4Fe-4S] cluster as a cofactor.

It carries out the reaction chlorophyllide a + oxidized 2[4Fe-4S]-[ferredoxin] + 2 ADP + 2 phosphate = protochlorophyllide a + reduced 2[4Fe-4S]-[ferredoxin] + 2 ATP + 2 H2O. It functions in the pathway porphyrin-containing compound metabolism; bacteriochlorophyll biosynthesis (light-independent). Component of the dark-operative protochlorophyllide reductase (DPOR) that uses Mg-ATP and reduced ferredoxin to reduce ring D of protochlorophyllide (Pchlide) to form chlorophyllide a (Chlide). This reaction is light-independent. The NB-protein (BchN-BchB) is the catalytic component of the complex. The chain is Light-independent protochlorophyllide reductase subunit N from Chlorobium luteolum (strain DSM 273 / BCRC 81028 / 2530) (Pelodictyon luteolum).